We begin with the raw amino-acid sequence, 541 residues long: Molybdate transporter 1 (541 aa).

The next 5 helical transmembrane spans lie at 24 to 44, 58 to 78, 98 to 118, 137 to 157, and 168 to 188; these read LLLS…PLLL, LLFS…PLPV, TVAA…TGGL, AGMS…GWLW, and GLGE…GLVV. The disordered stretch occupies residues 193–213; the sequence is QQQQQQQSGEKPQERRKKRSK. A run of 2 helical transmembrane segments spans residues 214-234 and 287-307; these read MPVQ…FAVV and MAIA…SALA. The disordered stretch occupies residues 317–366; that stretch reads PQLYADDESSDSPLSPSPSASSSSLSSAPPQTPSAETPKPLSSPTSAEEG. Low complexity predominate over residues 327–351; the sequence is DSPLSPSPSASSSSLSSAPPQTPSA. The next 2 membrane-spanning stretches (helical) occupy residues 413–433 and 435–455; these read IILL…PGLL and LLGK…GVEL. The segment at 510–541 is disordered; the sequence is TEKGRGGEQGLLGEEEEEEEQGRVDEESPLLR.

The protein belongs to the SLC26A/SulP transporter (TC 2.A.53) family.

It localises to the vacuole membrane. Its function is as follows. Exports stored molybdate from the vacuole into the cytosol, making it available for molybdate cofactor (Moco) biosynthesis. Plays a role in molybdate homeostasis as high cytosolic levels of molybdate are toxic to cells. Not required for molybdate import into cells. This is Molybdate transporter 1 from Neurospora crassa (strain ATCC 24698 / 74-OR23-1A / CBS 708.71 / DSM 1257 / FGSC 987).